The primary structure comprises 249 residues: MASLGVNIDHIANIREARRTVEPDPVSMALLAELGGADGITVHLREDRRHIQDRDVELLRQTVRSRLNLEMASTEEMVAIALRIKPDMVTLVPERREEVTTEGGLDVAGQKASLSAMVQTLQAAGIPVSLFVDPEATQLQACKNTGACWVELHTGRYADADWSTQPQELARLQEGTAIAQQLGLRVNAGHGLTYQNVEPIAAIAGMEELNIGHTIVARSVAVGLQQAVRDMKVLVQNPRLDPLFGQAPG.

Position 7 (Asn-7) interacts with 3-amino-2-oxopropyl phosphate. 9-10 (DH) provides a ligand contact to 1-deoxy-D-xylulose 5-phosphate. A 3-amino-2-oxopropyl phosphate-binding site is contributed by Arg-18. His-43 (proton acceptor) is an active-site residue. 1-deoxy-D-xylulose 5-phosphate contacts are provided by Arg-45 and His-50. The Proton acceptor role is filled by Glu-70. Position 100 (Thr-100) interacts with 1-deoxy-D-xylulose 5-phosphate. His-190 functions as the Proton donor in the catalytic mechanism. 3-amino-2-oxopropyl phosphate contacts are provided by residues Gly-191 and 212-213 (GH).

This sequence belongs to the PNP synthase family. As to quaternary structure, homooctamer; tetramer of dimers.

It localises to the cytoplasm. It carries out the reaction 3-amino-2-oxopropyl phosphate + 1-deoxy-D-xylulose 5-phosphate = pyridoxine 5'-phosphate + phosphate + 2 H2O + H(+). It participates in cofactor biosynthesis; pyridoxine 5'-phosphate biosynthesis; pyridoxine 5'-phosphate from D-erythrose 4-phosphate: step 5/5. In terms of biological role, catalyzes the complicated ring closure reaction between the two acyclic compounds 1-deoxy-D-xylulose-5-phosphate (DXP) and 3-amino-2-oxopropyl phosphate (1-amino-acetone-3-phosphate or AAP) to form pyridoxine 5'-phosphate (PNP) and inorganic phosphate. The sequence is that of Pyridoxine 5'-phosphate synthase from Synechococcus sp. (strain CC9605).